Reading from the N-terminus, the 230-residue chain is Phosphoribosylaminoimidazole-succinocarboxamide synthase (230 aa).

It belongs to the SAICAR synthetase family.

The enzyme catalyses 5-amino-1-(5-phospho-D-ribosyl)imidazole-4-carboxylate + L-aspartate + ATP = (2S)-2-[5-amino-1-(5-phospho-beta-D-ribosyl)imidazole-4-carboxamido]succinate + ADP + phosphate + 2 H(+). The protein operates within purine metabolism; IMP biosynthesis via de novo pathway; 5-amino-1-(5-phospho-D-ribosyl)imidazole-4-carboxamide from 5-amino-1-(5-phospho-D-ribosyl)imidazole-4-carboxylate: step 1/2. The protein is Phosphoribosylaminoimidazole-succinocarboxamide synthase (purC) of Thermotoga maritima (strain ATCC 43589 / DSM 3109 / JCM 10099 / NBRC 100826 / MSB8).